Reading from the N-terminus, the 729-residue chain is ATP-dependent DNA helicase Hel308 (729 aa).

ATP is bound by residues Gln28 and 46–53 (IPTASGKT). The region spanning 33–199 (EKGLLEGRNL…WLEAELVVSE (167 aa)) is the Helicase ATP-binding domain. Positions 144–147 (DEVH) match the DEAH box motif. Residues 232–426 (AVNLALDTLK…SKLGTENALR (195 aa)) form the Helicase C-terminal domain. The interval 706–729 (SSGIIASEPPEKSPYSGQKTISDY) is disordered. Positions 720-729 (YSGQKTISDY) are enriched in polar residues.

Belongs to the helicase family. Hel308 subfamily. As to quaternary structure, monomer.

The catalysed reaction is Couples ATP hydrolysis with the unwinding of duplex DNA by translocating in the 3'-5' direction.. It catalyses the reaction ATP + H2O = ADP + phosphate + H(+). DNA-dependent ATPase and 3'-5' DNA helicase that may be involved in repair of stalled replication forks. The sequence is that of ATP-dependent DNA helicase Hel308 from Methanosarcina barkeri (strain Fusaro / DSM 804).